A 362-amino-acid polypeptide reads, in one-letter code: S-adenosylmethionine decarboxylase proenzyme (362 aa).

Active-site residues include glutamate 11 and glutamate 14. Serine 71 functions as the Schiff-base intermediate with substrate; via pyruvic acid in the catalytic mechanism. Serine 71 is subject to Pyruvic acid (Ser); by autocatalysis. The Proton donor; for catalytic activity role is filled by cysteine 85. Active-site proton acceptor; for processing activity residues include serine 234 and histidine 247.

The protein belongs to the eukaryotic AdoMetDC family. The cofactor is pyruvate. Is synthesized initially as an inactive proenzyme. Formation of the active enzyme involves a self-maturation process in which the active site pyruvoyl group is generated from an internal serine residue via an autocatalytic post-translational modification. Two non-identical subunits are generated from the proenzyme in this reaction, and the pyruvate is formed at the N-terminus of the alpha chain, which is derived from the carboxyl end of the proenzyme. The post-translation cleavage follows an unusual pathway, termed non-hydrolytic serinolysis, in which the side chain hydroxyl group of the serine supplies its oxygen atom to form the C-terminus of the beta chain, while the remainder of the serine residue undergoes an oxidative deamination to produce ammonia and the pyruvoyl group blocking the N-terminus of the alpha chain.

It catalyses the reaction S-adenosyl-L-methionine + H(+) = S-adenosyl 3-(methylsulfanyl)propylamine + CO2. It functions in the pathway amine and polyamine biosynthesis; S-adenosylmethioninamine biosynthesis; S-adenosylmethioninamine from S-adenosyl-L-methionine: step 1/1. The protein is S-adenosylmethionine decarboxylase proenzyme (SAMDC) of Ipomoea batatas (Sweet potato).